A 423-amino-acid chain; its full sequence is 3-phosphoshikimate 1-carboxyvinyltransferase (423 aa).

The 3-phosphoshikimate site is built by K19, S20, and R24. K19 is a phosphoenolpyruvate binding site. G89 and R118 together coordinate phosphoenolpyruvate. 3-phosphoshikimate-binding residues include S164, S165, Q166, S192, D304, and K331. Q166 contributes to the phosphoenolpyruvate binding site. The Proton acceptor role is filled by D304. Residues R335 and R377 each contribute to the phosphoenolpyruvate site.

It belongs to the EPSP synthase family. As to quaternary structure, monomer.

The protein resides in the cytoplasm. The catalysed reaction is 3-phosphoshikimate + phosphoenolpyruvate = 5-O-(1-carboxyvinyl)-3-phosphoshikimate + phosphate. Its pathway is metabolic intermediate biosynthesis; chorismate biosynthesis. Its function is as follows. Catalyzes the transfer of the enolpyruvyl moiety of phosphoenolpyruvate (PEP) to the 5-hydroxyl of shikimate-3-phosphate (S3P) to produce enolpyruvyl shikimate-3-phosphate and inorganic phosphate. The sequence is that of 3-phosphoshikimate 1-carboxyvinyltransferase from Korarchaeum cryptofilum (strain OPF8).